The sequence spans 442 residues: UDP-N-acetylmuramate--L-alanine ligase (442 aa).

Residue 109–115 (GAHGKTS) participates in ATP binding.

The protein belongs to the MurCDEF family.

The protein localises to the cytoplasm. The catalysed reaction is UDP-N-acetyl-alpha-D-muramate + L-alanine + ATP = UDP-N-acetyl-alpha-D-muramoyl-L-alanine + ADP + phosphate + H(+). It functions in the pathway cell wall biogenesis; peptidoglycan biosynthesis. Cell wall formation. This is UDP-N-acetylmuramate--L-alanine ligase from Streptococcus pyogenes serotype M18 (strain MGAS8232).